A 131-amino-acid polypeptide reads, in one-letter code: Small ribosomal subunit protein uS8 (131 aa).

Belongs to the universal ribosomal protein uS8 family. In terms of assembly, part of the 30S ribosomal subunit. Contacts proteins S5 and S12.

Its function is as follows. One of the primary rRNA binding proteins, it binds directly to 16S rRNA central domain where it helps coordinate assembly of the platform of the 30S subunit. The polypeptide is Small ribosomal subunit protein uS8 (Finegoldia magna (strain ATCC 29328 / DSM 20472 / WAL 2508) (Peptostreptococcus magnus)).